A 426-amino-acid polypeptide reads, in one-letter code: Adenylosuccinate synthetase (426 aa).

Residues 13-19 (GDEGKGK) and 41-43 (GHT) each bind GTP. Aspartate 14 serves as the catalytic Proton acceptor. Aspartate 14 and glycine 41 together coordinate Mg(2+). IMP is bound by residues 14 to 17 (DEGK), 39 to 42 (NAGH), threonine 129, arginine 143, glutamine 224, threonine 239, and arginine 303. Histidine 42 serves as the catalytic Proton donor. Residue 299 to 305 (TTTGRPR) coordinates substrate. GTP contacts are provided by residues arginine 305, 331-333 (KLD), and 414-416 (GTG).

It belongs to the adenylosuccinate synthetase family. Homodimer. Requires Mg(2+) as cofactor.

It localises to the cytoplasm. The catalysed reaction is IMP + L-aspartate + GTP = N(6)-(1,2-dicarboxyethyl)-AMP + GDP + phosphate + 2 H(+). The protein operates within purine metabolism; AMP biosynthesis via de novo pathway; AMP from IMP: step 1/2. Its function is as follows. Plays an important role in the de novo pathway of purine nucleotide biosynthesis. Catalyzes the first committed step in the biosynthesis of AMP from IMP. In Caldicellulosiruptor bescii (strain ATCC BAA-1888 / DSM 6725 / KCTC 15123 / Z-1320) (Anaerocellum thermophilum), this protein is Adenylosuccinate synthetase.